The chain runs to 345 residues: S-adenosylmethionine:tRNA ribosyltransferase-isomerase (345 aa).

This sequence belongs to the QueA family. In terms of assembly, monomer.

The protein resides in the cytoplasm. It catalyses the reaction 7-aminomethyl-7-carbaguanosine(34) in tRNA + S-adenosyl-L-methionine = epoxyqueuosine(34) in tRNA + adenine + L-methionine + 2 H(+). It participates in tRNA modification; tRNA-queuosine biosynthesis. In terms of biological role, transfers and isomerizes the ribose moiety from AdoMet to the 7-aminomethyl group of 7-deazaguanine (preQ1-tRNA) to give epoxyqueuosine (oQ-tRNA). This Helicobacter pylori (strain P12) protein is S-adenosylmethionine:tRNA ribosyltransferase-isomerase.